Reading from the N-terminus, the 1069-residue chain is ISWI chromatin-remodeling complex ATPase CHR17 (1069 aa).

The span at 1–10 (MARASKREVS) shows a compositional bias: basic and acidic residues. Disordered regions lie at residues 1–93 (MARA…KEMQ) and 136–168 (FAKS…EECL). Acidic residues-rich tracts occupy residues 15-37 (YSSE…DELE) and 45-78 (SDEE…DEEK). Positions 79–93 (AEISKREKARLKEMQ) are enriched in basic and acidic residues. A compositionally biased stretch (basic residues) spans 146–156 (KKGKGRGRHSS). Residues 206-371 (IRLYENGING…WALLNFLLPE (166 aa)) enclose the Helicase ATP-binding domain. 219–226 (DEMGLGKT) is an ATP binding site. Residues 322 to 325 (DEAH) carry the DEAH box motif. In terms of domain architecture, Helicase C-terminal spans 499 to 650 (LLDKLLPKLK…ALVIQQGRLA (152 aa)). 2 consecutive SANT domains span residues 845-897 (EGFS…VRYK) and 946-1007 (QNKG…DTLI). The interval 1016–1069 (EFDERERQARKEKKLSKSATPSKRPSGRQANESPSSLLKKRKQLSMDDYGKRRK) is disordered. The segment covering 1032–1051 (KSATPSKRPSGRQANESPSS) has biased composition (polar residues). The span at 1059 to 1069 (LSMDDYGKRRK) shows a compositional bias: basic and acidic residues.

The protein belongs to the SNF2/RAD54 helicase family. ISWI subfamily. As to quaternary structure, interacts with RLT1. Binds to FGT1. In terms of tissue distribution, highly expressed in growing tissues such as inflorescence and flower meristems, young leaves and floral organs. Expressed in roots, rosette and cauline leaves, stems, flowers, inflorescences and siliques.

It is found in the nucleus. In terms of biological role, possesses intrinsic ATP-dependent nucleosome-remodeling activity. Constitutes the catalytic subunit of several complexes capable of forming ordered nucleosome arrays on chromatin. Involved in the formation of nucleosome distribution patterns. Required for the maintenance of the plant vegetative phase. In association with RLT1 or RLT2 may prevent the early activation of the vegetative-to-reproductive transition by regulating key genes that contribute to flower timing, such as FT, SEP1, SEP3, AGL8/FUL, SOC1 and FLC. Necessary to acquire heat stress (HS) memory. The protein is ISWI chromatin-remodeling complex ATPase CHR17 of Arabidopsis thaliana (Mouse-ear cress).